The sequence spans 443 residues: UDP-N-acetylmuramate--L-alanine ligase (443 aa).

110–116 (GAHGKTS) is an ATP binding site.

It belongs to the MurCDEF family.

Its subcellular location is the cytoplasm. The catalysed reaction is UDP-N-acetyl-alpha-D-muramate + L-alanine + ATP = UDP-N-acetyl-alpha-D-muramoyl-L-alanine + ADP + phosphate + H(+). It functions in the pathway cell wall biogenesis; peptidoglycan biosynthesis. Cell wall formation. The chain is UDP-N-acetylmuramate--L-alanine ligase from Streptococcus equi subsp. zooepidemicus (strain MGCS10565).